The chain runs to 313 residues: tRNA dimethylallyltransferase (313 aa).

Residue 11–18 participates in ATP binding; that stretch reads GPTAAGKS. 13–18 lines the substrate pocket; that stretch reads TAAGKS. Interaction with substrate tRNA stretches follow at residues 36 to 39, 160 to 164, and 244 to 249; these read DSAT, QRIQR, and RCVGYR.

The protein belongs to the IPP transferase family. As to quaternary structure, monomer. It depends on Mg(2+) as a cofactor.

It carries out the reaction adenosine(37) in tRNA + dimethylallyl diphosphate = N(6)-dimethylallyladenosine(37) in tRNA + diphosphate. Catalyzes the transfer of a dimethylallyl group onto the adenine at position 37 in tRNAs that read codons beginning with uridine, leading to the formation of N6-(dimethylallyl)adenosine (i(6)A). The chain is tRNA dimethylallyltransferase from Bordetella parapertussis (strain 12822 / ATCC BAA-587 / NCTC 13253).